Here is a 654-residue protein sequence, read N- to C-terminus: Macrolide export ATP-binding/permease protein MacB (654 aa).

An ABC transporter domain is found at 6–244; the sequence is IEISALNRIF…TSASSATDAA (239 aa). 42–49 provides a ligand contact to ATP; the sequence is GTSGSGKS. 4 consecutive transmembrane segments (helical) span residues 279-299, 534-554, 584-604, and 617-637; these read LLTM…VAIG, IAVI…LVSV, MVCL…GALF, and VTAI…FGFL.

This sequence belongs to the ABC transporter superfamily. Macrolide exporter (TC 3.A.1.122) family. Homodimer. Part of the tripartite efflux system MacAB-TolC, which is composed of an inner membrane transporter, MacB, a periplasmic membrane fusion protein, MacA, and an outer membrane component, TolC. The complex forms a large protein conduit and can translocate molecules across both the inner and outer membranes. Interacts with MacA.

It is found in the cell inner membrane. In terms of biological role, part of the tripartite efflux system MacAB-TolC. MacB is a non-canonical ABC transporter that contains transmembrane domains (TMD), which form a pore in the inner membrane, and an ATP-binding domain (NBD), which is responsible for energy generation. Confers resistance against macrolides. In Hahella chejuensis (strain KCTC 2396), this protein is Macrolide export ATP-binding/permease protein MacB.